Reading from the N-terminus, the 214-residue chain is External core antigen (214 aa).

An N-terminal signal peptide occupies residues 1-19; that stretch reads MQLFHLCLIISCTCPTVQA. The tract at residues 25–27 is HBEAG; sequence GWL. The segment at 165–214 is disordered; the sequence is NAPILSTLPETTVVRRRDRGRSPRRRTPSPRRRRSQSPRRRRSQSRESQC. Residues 178–207 are compositionally biased toward basic residues; sequence VRRRDRGRSPRRRTPSPRRRRSQSPRRRRS. One copy of the 1; half-length repeat lies at 186-192; sequence SPRRRTP. Residues 186 to 208 are 3 X 8 AA repeats of S-P-R-R-R-R-S-Q; sequence SPRRRTPSPRRRRSQSPRRRRSQ. The propeptide occupies 186–214; it reads SPRRRTPSPRRRRSQSPRRRRSQSRESQC. Repeat copies occupy residues 193–200 and 201–208.

It belongs to the orthohepadnavirus precore antigen family. Homodimerizes. In terms of processing, phosphorylated. Cleaved by host furin.

It localises to the secreted. The protein localises to the host nucleus. May regulate immune response to the intracellular capsid in acting as a T-cell tolerogen, by having an immunoregulatory effect which prevents destruction of infected cells by cytotoxic T-cells. This immune regulation may predispose to chronicity during perinatal infections and prevent severe liver injury during adult infections. The sequence is that of External core antigen from Homo sapiens (Human).